We begin with the raw amino-acid sequence, 126 residues long: Small ribosomal subunit protein uS13 (126 aa).

Residues 92 to 126 form a disordered region; sequence HRRGLPANGQRTHTNARTRKGPRKGMLQRRPAATK. A compositionally biased stretch (basic residues) spans 105 to 118; it reads TNARTRKGPRKGML.

Belongs to the universal ribosomal protein uS13 family. As to quaternary structure, part of the 30S ribosomal subunit. Forms a loose heterodimer with protein S19. Forms two bridges to the 50S subunit in the 70S ribosome.

In terms of biological role, located at the top of the head of the 30S subunit, it contacts several helices of the 16S rRNA. In the 70S ribosome it contacts the 23S rRNA (bridge B1a) and protein L5 of the 50S subunit (bridge B1b), connecting the 2 subunits; these bridges are implicated in subunit movement. Contacts the tRNAs in the A and P-sites. The polypeptide is Small ribosomal subunit protein uS13 (Sorangium cellulosum (strain So ce56) (Polyangium cellulosum (strain So ce56))).